Here is a 245-residue protein sequence, read N- to C-terminus: Thiopurine S-methyltransferase (245 aa).

Phosphoserine is present on serine 14. 29-40 contributes to the S-adenosyl-L-methionine binding site; sequence WQDKWVNGKTAF. A substrate-binding site is contributed by phenylalanine 40. Lysine 58 bears the N6-acetyllysine mark. Residues leucine 69, glutamate 90, 134–135, and arginine 152 contribute to the S-adenosyl-L-methionine site; that span reads SI.

The protein belongs to the class I-like SAM-binding methyltransferase superfamily. TPMT family. In terms of assembly, monomer.

It is found in the cytoplasm. It carries out the reaction S-adenosyl-L-methionine + a thiopurine = S-adenosyl-L-homocysteine + a thiopurine S-methylether.. The catalysed reaction is mercaptopurine + S-adenosyl-L-methionine = 6-methylthiopurine + S-adenosyl-L-homocysteine + H(+). The enzyme catalyses 6-thioguanine + S-adenosyl-L-methionine = 6-methylthioguanine + S-adenosyl-L-homocysteine + H(+). Its activity is regulated as follows. Inhibited by S-adenosyl-L-homocysteine (SAH). Its function is as follows. Catalyzes the S-methylation of thiopurine drugs such as 6-mercaptopurine (also called mercaptopurine, 6-MP or its brand name Purinethol) and 6-thioguanine (also called tioguanine or 6-TG) using S-adenosyl-L-methionine as the methyl donor. TPMT activity modulates the cytotoxic effects of thiopurine prodrugs. A natural substrate for this enzyme has yet to be identified. The polypeptide is Thiopurine S-methyltransferase (TPMT) (Homo sapiens (Human)).